A 116-amino-acid chain; its full sequence is Protein TRACHEARY ELEMENT DIFFERENTIATION-RELATED 6 (116 aa).

At M1 to V24 the chain is on the extracellular side. Residues F25–I45 traverse the membrane as a helical segment. The Cytoplasmic portion of the chain corresponds to K46–S116.

Interacts with CESA7/IRX3, a subunit of the secondary cell wall (SCW)-related cellulose synthase complex. As to expression, expressed preferentially in differentiating vessel elements in seedlings.

It is found in the cell membrane. Its subcellular location is the secreted. It localises to the cell wall. In terms of biological role, involved in the secondary cell wall (SCW) formation of vessel elements (e.g. protoxylem and metaxylem), thus promoting tracheary element (TE) differentiation. The chain is Protein TRACHEARY ELEMENT DIFFERENTIATION-RELATED 6 from Arabidopsis thaliana (Mouse-ear cress).